Consider the following 122-residue polypeptide: Large ribosomal subunit protein uL18 (122 aa).

It belongs to the universal ribosomal protein uL18 family. Part of the 50S ribosomal subunit; part of the 5S rRNA/L5/L18/L25 subcomplex. Contacts the 5S and 23S rRNAs.

In terms of biological role, this is one of the proteins that bind and probably mediate the attachment of the 5S RNA into the large ribosomal subunit, where it forms part of the central protuberance. The sequence is that of Large ribosomal subunit protein uL18 from Lachnospira eligens (strain ATCC 27750 / DSM 3376 / VPI C15-48 / C15-B4) (Eubacterium eligens).